The following is a 157-amino-acid chain: D-aminoacyl-tRNA deacylase (157 aa).

Residues 137-138 (GP) carry the Gly-cisPro motif, important for rejection of L-amino acids motif.

The protein belongs to the DTD family. Homodimer.

The protein localises to the cytoplasm. It carries out the reaction glycyl-tRNA(Ala) + H2O = tRNA(Ala) + glycine + H(+). The enzyme catalyses a D-aminoacyl-tRNA + H2O = a tRNA + a D-alpha-amino acid + H(+). In terms of biological role, an aminoacyl-tRNA editing enzyme that deacylates mischarged D-aminoacyl-tRNAs. Also deacylates mischarged glycyl-tRNA(Ala), protecting cells against glycine mischarging by AlaRS. Acts via tRNA-based rather than protein-based catalysis; rejects L-amino acids rather than detecting D-amino acids in the active site. By recycling D-aminoacyl-tRNA to D-amino acids and free tRNA molecules, this enzyme counteracts the toxicity associated with the formation of D-aminoacyl-tRNA entities in vivo and helps enforce protein L-homochirality. This chain is D-aminoacyl-tRNA deacylase, found in Cyanothece sp. (strain PCC 7425 / ATCC 29141).